We begin with the raw amino-acid sequence, 399 residues long: Elongation factor Tu (399 aa).

The tr-type G domain occupies 10-208 (KPHVNIGTIG…TVDSYIPEPE (199 aa)). The segment at 19 to 26 (GHVDHGKT) is G1. 19 to 26 (GHVDHGKT) is a binding site for GTP. T26 is a binding site for Mg(2+). The segment at 64 to 68 (GITIN) is G2. Residues 85–88 (DAPG) are G3. Residues 85–89 (DAPGH) and 140–143 (NKVD) contribute to the GTP site. The interval 140–143 (NKVD) is G4. The G5 stretch occupies residues 178-180 (SAL).

The protein belongs to the TRAFAC class translation factor GTPase superfamily. Classic translation factor GTPase family. EF-Tu/EF-1A subfamily. As to quaternary structure, monomer.

The protein resides in the cytoplasm. It carries out the reaction GTP + H2O = GDP + phosphate + H(+). GTP hydrolase that promotes the GTP-dependent binding of aminoacyl-tRNA to the A-site of ribosomes during protein biosynthesis. This Streptococcus pyogenes serotype M12 (strain MGAS2096) protein is Elongation factor Tu.